A 395-amino-acid polypeptide reads, in one-letter code: Argininosuccinate synthase (395 aa).

Residues 10 to 18 (AYSGGLDTS) and Ala-37 contribute to the ATP site. The L-citrulline site is built by Tyr-88 and Ser-93. Gly-118 lines the ATP pocket. Positions 120, 124, and 125 each coordinate L-aspartate. Asn-124 provides a ligand contact to L-citrulline. Arg-128, Ser-179, Ser-188, Glu-264, and Tyr-276 together coordinate L-citrulline.

The protein belongs to the argininosuccinate synthase family. Type 1 subfamily. As to quaternary structure, homotetramer.

It is found in the cytoplasm. It carries out the reaction L-citrulline + L-aspartate + ATP = 2-(N(omega)-L-arginino)succinate + AMP + diphosphate + H(+). It participates in amino-acid biosynthesis; L-arginine biosynthesis; L-arginine from L-ornithine and carbamoyl phosphate: step 2/3. The sequence is that of Argininosuccinate synthase from Pelagibacter ubique (strain HTCC1062).